A 299-amino-acid polypeptide reads, in one-letter code: Large ribosomal subunit protein uL18 (299 aa).

This sequence belongs to the universal ribosomal protein uL18 family. As to quaternary structure, component of the large ribosomal subunit (LSU).

The protein localises to the cytoplasm. The protein resides in the nucleus. Its function is as follows. Component of the ribosome, a large ribonucleoprotein complex responsible for the synthesis of proteins in the cell. The small ribosomal subunit (SSU) binds messenger RNAs (mRNAs) and translates the encoded message by selecting cognate aminoacyl-transfer RNA (tRNA) molecules. The large subunit (LSU) contains the ribosomal catalytic site termed the peptidyl transferase center (PTC), which catalyzes the formation of peptide bonds, thereby polymerizing the amino acids delivered by tRNAs into a polypeptide chain. The nascent polypeptides leave the ribosome through a tunnel in the LSU and interact with protein factors that function in enzymatic processing, targeting, and the membrane insertion of nascent chains at the exit of the ribosomal tunnel. The polypeptide is Large ribosomal subunit protein uL18 (RpL5) (Bombyx mori (Silk moth)).